A 339-amino-acid chain; its full sequence is DNA-directed RNA polymerase subunit alpha (339 aa).

The segment at 1-235 (MVLQKNWQSL…DQLQLFINFD (235 aa)) is alpha N-terminal domain (alpha-NTD). The interval 251-339 (FNRNLLRKVD…DLAKRLDETF (89 aa)) is alpha C-terminal domain (alpha-CTD).

The protein belongs to the RNA polymerase alpha chain family. In terms of assembly, homodimer. The RNAP catalytic core consists of 2 alpha, 1 beta, 1 beta' and 1 omega subunit. When a sigma factor is associated with the core the holoenzyme is formed, which can initiate transcription.

The enzyme catalyses RNA(n) + a ribonucleoside 5'-triphosphate = RNA(n+1) + diphosphate. Functionally, DNA-dependent RNA polymerase catalyzes the transcription of DNA into RNA using the four ribonucleoside triphosphates as substrates. The sequence is that of DNA-directed RNA polymerase subunit alpha from Gluconobacter oxydans (strain 621H) (Gluconobacter suboxydans).